Reading from the N-terminus, the 493-residue chain is uncharacterized protein (493 aa).

Ser-328 carries the post-translational modification Phosphoserine. The segment covering 466 to 486 has biased composition (polar residues); it reads AESNSGRGQNSKTKTTSVNLS. The segment at 466 to 493 is disordered; that stretch reads AESNSGRGQNSKTKTTSVNLSRNKRTRT.

This is an uncharacterized protein from Schizosaccharomyces pombe (strain 972 / ATCC 24843) (Fission yeast).